Reading from the N-terminus, the 220-residue chain is UPF0319 protein YccT (220 aa).

The first 20 residues, 1–20 (MKAGTLTLLIALCLPISVSA), serve as a signal peptide directing secretion.

Belongs to the UPF0319 family.

The protein is UPF0319 protein YccT of Escherichia fergusonii (strain ATCC 35469 / DSM 13698 / CCUG 18766 / IAM 14443 / JCM 21226 / LMG 7866 / NBRC 102419 / NCTC 12128 / CDC 0568-73).